The primary structure comprises 87 residues: Venom serine protease inhibitor (87 aa).

A signal peptide spans 1–23 (MPRLVLVSFLFLAIFSVFIGGFA). 5 cysteine pairs are disulfide-bonded: Cys-27-Cys-61, Cys-36-Cys-57, Cys-40-Cys-53, Cys-44-Cys-81, and Cys-63-Cys-75. In terms of domain architecture, TIL spans 27–81 (CPRNEIFTRCHAACQPSCARLARKPFCIKICKPGCICTSGYLRNKNNVCVPRSRC).

The protein belongs to the serine protease inhibitor-like (TIL domain-containing) family. As to expression, specifically expressed by the venom gland.

It localises to the secreted. In terms of biological role, antifibrinolytic and antimicrobial serine protease inhibitor. Inhibits trypsin, plasmin and microbial serine proteases but not chymotrypsin, thrombin and elastase. Inhibits the plasmin-mediated degradation of fibrin to fibrin degradation products. Also binds to bacterial and fungal surfaces and exhibits antimicrobial activity against fungi as well as Gram-positive and Gram-negative bacteria. This is Venom serine protease inhibitor from Apis cerana (Indian honeybee).